Here is a 118-residue protein sequence, read N- to C-terminus: Ribosome-binding factor A (118 aa).

It belongs to the RbfA family. In terms of assembly, monomer. Binds 30S ribosomal subunits, but not 50S ribosomal subunits or 70S ribosomes.

It localises to the cytoplasm. Its function is as follows. One of several proteins that assist in the late maturation steps of the functional core of the 30S ribosomal subunit. Associates with free 30S ribosomal subunits (but not with 30S subunits that are part of 70S ribosomes or polysomes). Required for efficient processing of 16S rRNA. May interact with the 5'-terminal helix region of 16S rRNA. The protein is Ribosome-binding factor A of Geobacter metallireducens (strain ATCC 53774 / DSM 7210 / GS-15).